The following is a 542-amino-acid chain: CTP synthase (542 aa).

The amidoligase domain stretch occupies residues 1–265 (MARYVFITGG…DSEVLSAFGI (265 aa)). Serine 13 contacts CTP. Serine 13 contacts UTP. ATP is bound at residue 14–19 (SLGKGI). Position 54 (tyrosine 54) interacts with L-glutamine. Position 71 (aspartate 71) interacts with ATP. Mg(2+) is bound by residues aspartate 71 and glutamate 139. Residues 146 to 148 (DIE), 186 to 191 (KTKPTQ), and lysine 222 each bind CTP. Residues 186–191 (KTKPTQ) and lysine 222 contribute to the UTP site. A Glutamine amidotransferase type-1 domain is found at 291–541 (TIAVVGKYTG…IEAAIEQSRL (251 aa)). Position 353 (glycine 353) interacts with L-glutamine. Cysteine 380 serves as the catalytic Nucleophile; for glutamine hydrolysis. L-glutamine is bound by residues 381–384 (FGMQ), glutamate 404, and arginine 469. Residues histidine 514 and glutamate 516 contribute to the active site.

The protein belongs to the CTP synthase family. As to quaternary structure, homotetramer.

It carries out the reaction UTP + L-glutamine + ATP + H2O = CTP + L-glutamate + ADP + phosphate + 2 H(+). It catalyses the reaction L-glutamine + H2O = L-glutamate + NH4(+). The enzyme catalyses UTP + NH4(+) + ATP = CTP + ADP + phosphate + 2 H(+). It functions in the pathway pyrimidine metabolism; CTP biosynthesis via de novo pathway; CTP from UDP: step 2/2. With respect to regulation, allosterically activated by GTP, when glutamine is the substrate; GTP has no effect on the reaction when ammonia is the substrate. The allosteric effector GTP functions by stabilizing the protein conformation that binds the tetrahedral intermediate(s) formed during glutamine hydrolysis. Inhibited by the product CTP, via allosteric rather than competitive inhibition. Its function is as follows. Catalyzes the ATP-dependent amination of UTP to CTP with either L-glutamine or ammonia as the source of nitrogen. Regulates intracellular CTP levels through interactions with the four ribonucleotide triphosphates. The sequence is that of CTP synthase from Brucella abortus (strain 2308).